The primary structure comprises 211 residues: Outer-membrane lipoprotein carrier protein (211 aa).

Positions 1-24 (MNTIKILIGLLGIFLFSLSGIVSA) are cleaved as a signal peptide.

The protein belongs to the LolA family. As to quaternary structure, monomer.

It localises to the periplasm. Functionally, participates in the translocation of lipoproteins from the inner membrane to the outer membrane. Only forms a complex with a lipoprotein if the residue after the N-terminal Cys is not an aspartate (The Asp acts as a targeting signal to indicate that the lipoprotein should stay in the inner membrane). The polypeptide is Outer-membrane lipoprotein carrier protein (Coxiella burnetii (strain CbuK_Q154) (Coxiella burnetii (strain Q154))).